The following is a 131-amino-acid chain: D-ribose pyranase (131 aa).

Histidine 20 (proton donor) is an active-site residue. Substrate contacts are provided by residues aspartate 28, histidine 98, and 120–122 (FSN).

Belongs to the RbsD / FucU family. RbsD subfamily. Homodecamer.

The protein resides in the cytoplasm. The catalysed reaction is beta-D-ribopyranose = beta-D-ribofuranose. The protein operates within carbohydrate metabolism; D-ribose degradation; D-ribose 5-phosphate from beta-D-ribopyranose: step 1/2. Functionally, catalyzes the interconversion of beta-pyran and beta-furan forms of D-ribose. The sequence is that of D-ribose pyranase from Levilactobacillus brevis (strain ATCC 367 / BCRC 12310 / CIP 105137 / JCM 1170 / LMG 11437 / NCIMB 947 / NCTC 947) (Lactobacillus brevis).